We begin with the raw amino-acid sequence, 197 residues long: Holliday junction branch migration complex subunit RuvA (197 aa).

The segment at 1–64 is domain I; sequence MYDYIKGIYK…DDSINLYGFF (64 aa). The segment at 65–143 is domain II; that stretch reads TEEERDMFNL…NDDIISDIDD (79 aa). The interval 144-154 is flexible linker; that stretch reads LDSISNFQLHS. Positions 154–197 are domain III; that stretch reads SAEALEALMSLGYSQKESEKALKNVDKENSLEDIIKACLKYLMG.

The protein belongs to the RuvA family. In terms of assembly, homotetramer. Forms an RuvA(8)-RuvB(12)-Holliday junction (HJ) complex. HJ DNA is sandwiched between 2 RuvA tetramers; dsDNA enters through RuvA and exits via RuvB. An RuvB hexamer assembles on each DNA strand where it exits the tetramer. Each RuvB hexamer is contacted by two RuvA subunits (via domain III) on 2 adjacent RuvB subunits; this complex drives branch migration. In the full resolvosome a probable DNA-RuvA(4)-RuvB(12)-RuvC(2) complex forms which resolves the HJ.

The protein localises to the cytoplasm. The RuvA-RuvB-RuvC complex processes Holliday junction (HJ) DNA during genetic recombination and DNA repair, while the RuvA-RuvB complex plays an important role in the rescue of blocked DNA replication forks via replication fork reversal (RFR). RuvA specifically binds to HJ cruciform DNA, conferring on it an open structure. The RuvB hexamer acts as an ATP-dependent pump, pulling dsDNA into and through the RuvAB complex. HJ branch migration allows RuvC to scan DNA until it finds its consensus sequence, where it cleaves and resolves the cruciform DNA. The protein is Holliday junction branch migration complex subunit RuvA of Clostridium tetani (strain Massachusetts / E88).